Reading from the N-terminus, the 452-residue chain is 1,3-beta-glucanosyltransferase gel1 (452 aa).

The N-terminal stretch at 1–19 (MKASAVTAALAVGASTVLA) is a signal peptide. C71 and C100 are joined by a disulfide. (1,3-beta-D-glucosyl)n-binding residues include Y89, N159, E160, D201, and R206. Catalysis depends on E160, which acts as the Proton donor. 2 cysteine pairs are disulfide-bonded: C215/C345 and C233/C264. N249 carries an N-linked (GlcNAc...) asparagine glycan. The active-site Nucleophile is E261. Y292 contacts (1,3-beta-D-glucosyl)n. The segment covering 325–340 (EKTSNPSGDGNYNKTG) has biased composition (polar residues). A disordered region spans residues 325–419 (EKTSNPSGDG…SGTSTSSKGA (95 aa)). A glycan (N-linked (GlcNAc...) asparagine) is linked at N337. Over residues 393–419 (STATAEPGSGSATGSSSSGTSTSSKGA) the composition is skewed to low complexity. A419 is lipidated: GPI-like-anchor amidated alanine. A propeptide spans 420–452 (AAGLTVPSLTMAPVVVGAVTLLSTVFGAGLVLL) (removed in mature form).

Belongs to the glycosyl hydrolase 72 family. The GPI-like anchor contains a phosphoceramide lipid group. The anchor position has not been determined.

The protein resides in the cell membrane. In terms of biological role, splits internally a 1,3-beta-glucan molecule and transfers the newly generated reducing end (the donor) to the non-reducing end of another 1,3-beta-glucan molecule (the acceptor) forming a 1,3-beta linkage, resulting in the elongation of 1,3-beta-glucan chains in the cell wall. Involved in cell wall morphogenesis. The polypeptide is 1,3-beta-glucanosyltransferase gel1 (gel1) (Aspergillus fumigatus (strain CBS 144.89 / FGSC A1163 / CEA10) (Neosartorya fumigata)).